The chain runs to 147 residues: Ubiquitin-conjugating enzyme E2 4 (147 aa).

A UBC core domain is found at 1–147 (MALKRINREL…AREWTRKYAI (147 aa)). Cys85 (glycyl thioester intermediate) is an active-site residue.

Belongs to the ubiquitin-conjugating enzyme family. As to quaternary structure, interacts with the E1 ubiquitin-activating enzyme ptr3 and E3 ubiquitin-protein ligase pub2.

It catalyses the reaction S-ubiquitinyl-[E1 ubiquitin-activating enzyme]-L-cysteine + [E2 ubiquitin-conjugating enzyme]-L-cysteine = [E1 ubiquitin-activating enzyme]-L-cysteine + S-ubiquitinyl-[E2 ubiquitin-conjugating enzyme]-L-cysteine.. It participates in protein modification; protein ubiquitination. In terms of biological role, E2 ubiquitin-conjugating enzyme that catalyzes the covalent attachment of ubiquitin to other proteins. Mediates the selective degradation of short-lived and abnormal proteins. Mediates ubiquitination of pex5. The polypeptide is Ubiquitin-conjugating enzyme E2 4 (ubc4) (Schizosaccharomyces pombe (strain 972 / ATCC 24843) (Fission yeast)).